A 731-amino-acid chain; its full sequence is Unconventional prefoldin RPB5 interactor-like protein (731 aa).

Coiled-coil stretches lie at residues 91-115 and 143-176; these read RLKLAEEQLKKLAVENDLWQKKLHT and LAEHRKRMRQQKQKERLEREAEPVKKDNEVLRKL. Positions 205 to 217 are enriched in polar residues; the sequence is PLKSTNESSPKSL. 3 disordered regions span residues 205 to 224, 259 to 302, and 370 to 396; these read PLKSTNESSPKSLTQEEEDE, MSGE…EEEV, and ASEEEEEVVENNHLPDEPSKELSTVSE. Residues 220–258 are a coiled coil; that stretch reads EEEDELWKKLEAEEQNEADELSSEAEESLKTTDNLVRQL. Acidic residues predominate over residues 285–300; that stretch reads ISEDDGDDDDEGDQEE. 2 coiled-coil regions span residues 357–379 and 452–477; these read DDLQDLVFEQELEASEEEEEVVE and SIKTKRQTTQDILQKVERNIEFVKEN. Composition is skewed to polar residues over residues 508–518 and 575–599; these read GAIPSPSSDQS and SQFSKPNSSEICFTHSGSITPTSND. Disordered stretches follow at residues 508 to 527, 567 to 682, and 694 to 731; these read GAIPSPSSDQSDGIPGKPSD, GSAY…DLRD, and VEKEPTAPEPLPPGKFIDSHAPKKRVSRFKEQRALNKT. The segment covering 611-621 has biased composition (basic and acidic residues); it reads FYEKYEKDRAK. A compositionally biased stretch (polar residues) spans 623 to 644; it reads SKSNSSEGDATDPESATKSILR. Over residues 661 to 673 the composition is skewed to basic residues; sequence KKGRKVRNQKKKE. The span at 721–731 shows a compositional bias: basic and acidic residues; sequence RFKEQRALNKT.

Belongs to the RNA polymerase II subunit 5-mediating protein family. As to quaternary structure, interacts with serine/threonine-protein phosphatases flw/PP1beta9C and Pp1-87B with higher affinity for Pp1-87B.

The protein resides in the cytoplasm. It is found in the chromosome. Its subcellular location is the nucleus. In terms of biological role, inhibits the activity of serine/threonine-protein phosphatases flw/PP1beta9C and Pp1-87B. Required for germ line cell viability and differentiation, normal transcriptional activity and maintenance of DNA integrity. The polypeptide is Unconventional prefoldin RPB5 interactor-like protein (Drosophila melanogaster (Fruit fly)).